Reading from the N-terminus, the 934-residue chain is LPS-assembly protein LptD (934 aa).

The N-terminal stretch at 1-33 (MALKSPAFRRKFPLLVTGGLLALQPFATSYVVA) is a signal peptide. Positions 52 to 86 (KSPVNNLPPRPVHDGAALTSGTEAPSAEAESADKP) are disordered.

It belongs to the LptD family. As to quaternary structure, component of the lipopolysaccharide transport and assembly complex. Interacts with LptE and LptA.

The protein resides in the cell outer membrane. In terms of biological role, together with LptE, is involved in the assembly of lipopolysaccharide (LPS) at the surface of the outer membrane. The sequence is that of LPS-assembly protein LptD from Pseudomonas putida (strain W619).